We begin with the raw amino-acid sequence, 245 residues long: Bis(5'-nucleosyl)-tetraphosphatase PrpE [asymmetrical] (245 aa).

This sequence belongs to the PrpE family. It depends on Ni(2+) as a cofactor.

The enzyme catalyses P(1),P(4)-bis(5'-guanosyl) tetraphosphate + H2O = GMP + GTP + 2 H(+). Asymmetrically hydrolyzes Ap4p to yield AMP and ATP. This Geobacillus thermodenitrificans (strain NG80-2) protein is Bis(5'-nucleosyl)-tetraphosphatase PrpE [asymmetrical].